The sequence spans 346 residues: MNKKSVLVIHGGAGVISKSTISKEREEIFLNSLKNILLAGKIILKQGGTSLDVVQEAVRLLEEDPIYNAGKGSVFTELGTNEMDAAIMDGTNLKAGAVGGVSIIRNPIIAARAVMEHTNHCLLVGKGAEEFAKSKNLEIVEPSFFFTQNRYDQLLRAKDEKKLILDHDGENLLEKEKEKEKNNETSTTTTTISVGVDPIDPKYKMGTVGAVCLDSFGNLAAATSTGGMTNKMHGRVGDTPIIGAGVYANKNVAVSSTGTGEAFMRTVAAFDIAAMMEYGSLSLKDASNKVVMEKLITVGDGGVICVDKYGNVEMPFNTEGMYRGYVIIDNNCENDQNDIINVSIYK.

The active-site Nucleophile is the threonine 207. Substrate contacts are provided by residues 235–238 (RVGD) and 257–260 (TGTG).

Belongs to the Ntn-hydrolases family. Heterodimer of an alpha and beta chain produced by autocleavage. Cleaved into an alpha and beta chain by autocatalysis; this activates the enzyme. The N-terminal residue of the beta subunit is responsible for the nucleophile hydrolase activity.

It catalyses the reaction Cleavage of a beta-linked Asp residue from the N-terminus of a polypeptide.. It carries out the reaction L-asparagine + H2O = L-aspartate + NH4(+). Has both L-asparaginase and beta-aspartyl peptidase activity. Does not have aspartylglucosaminidase activity and is inactive toward GlcNAc-L-Asn. Likewise, has no activity toward glutamine. The polypeptide is Putative isoaspartyl peptidase/L-asparaginase (Dictyostelium discoideum (Social amoeba)).